Reading from the N-terminus, the 119-residue chain is Large ribosomal subunit protein uL22 (119 aa).

It belongs to the universal ribosomal protein uL22 family. Part of the 50S ribosomal subunit.

This protein binds specifically to 23S rRNA; its binding is stimulated by other ribosomal proteins, e.g. L4, L17, and L20. It is important during the early stages of 50S assembly. It makes multiple contacts with different domains of the 23S rRNA in the assembled 50S subunit and ribosome. In terms of biological role, the globular domain of the protein is located near the polypeptide exit tunnel on the outside of the subunit, while an extended beta-hairpin is found that lines the wall of the exit tunnel in the center of the 70S ribosome. The sequence is that of Large ribosomal subunit protein uL22 from Rickettsia typhi (strain ATCC VR-144 / Wilmington).